The chain runs to 269 residues: Cytochrome c oxidase subunit 3 (269 aa).

Transmembrane regions (helical) follow at residues 19–39 (PWPF…TLYL), 44–64 (HSSV…YLWF), 87–107 (IGFM…FWAF), 135–155 (LEVP…LTYA), 170–190 (GLYM…YEYW), 205–225 (FYFA…LLLA), and 247–267 (IYYW…IYIW).

The protein belongs to the cytochrome c oxidase subunit 3 family. As to quaternary structure, component of the cytochrome c oxidase (complex IV, CIV), a multisubunit enzyme composed of a catalytic core of 3 subunits and several supernumerary subunits. The complex exists as a monomer or a dimer and forms supercomplexes (SCs) in the inner mitochondrial membrane with ubiquinol-cytochrome c oxidoreductase (cytochrome b-c1 complex, complex III, CIII).

It localises to the mitochondrion inner membrane. It carries out the reaction 4 Fe(II)-[cytochrome c] + O2 + 8 H(+)(in) = 4 Fe(III)-[cytochrome c] + 2 H2O + 4 H(+)(out). Functionally, component of the cytochrome c oxidase, the last enzyme in the mitochondrial electron transport chain which drives oxidative phosphorylation. The respiratory chain contains 3 multisubunit complexes succinate dehydrogenase (complex II, CII), ubiquinol-cytochrome c oxidoreductase (cytochrome b-c1 complex, complex III, CIII) and cytochrome c oxidase (complex IV, CIV), that cooperate to transfer electrons derived from NADH and succinate to molecular oxygen, creating an electrochemical gradient over the inner membrane that drives transmembrane transport and the ATP synthase. Cytochrome c oxidase is the component of the respiratory chain that catalyzes the reduction of oxygen to water. Electrons originating from reduced cytochrome c in the intermembrane space (IMS) are transferred via the dinuclear copper A center (CU(A)) of subunit 2 and heme A of subunit 1 to the active site in subunit 1, a binuclear center (BNC) formed by heme A3 and copper B (CU(B)). The BNC reduces molecular oxygen to 2 water molecules using 4 electrons from cytochrome c in the IMS and 4 protons from the mitochondrial matrix. The polypeptide is Cytochrome c oxidase subunit 3 (cox3) (Schizosaccharomyces pombe (strain 972 / ATCC 24843) (Fission yeast)).